A 207-amino-acid chain; its full sequence is MPPRVEGLYAVTPDGLDDARLFALAAAALAGGARALQYRDKSGDAGRRLRQAAELQRLCRAHGALFIVNDDVELAERIGADGVHLGRDDGDIAAARRRLGADAVIGASCYDRIELARAALAAGASYVAFGAVFPSRTKPHAAAAPLSLFADAAALGANAVAIGGIAAGNAGRAVEAGADAIAVIGGLFDADDTAAAARALAGWFGAR.

4-amino-2-methyl-5-(diphosphooxymethyl)pyrimidine-binding positions include 37-41 and N69; that span reads QYRDK. Mg(2+)-binding residues include D70 and D89. Residue S108 coordinates 4-amino-2-methyl-5-(diphosphooxymethyl)pyrimidine. 135 to 137 is a 2-[(2R,5Z)-2-carboxy-4-methylthiazol-5(2H)-ylidene]ethyl phosphate binding site; the sequence is SRT. 4-amino-2-methyl-5-(diphosphooxymethyl)pyrimidine is bound at residue K138. G164 lines the 2-[(2R,5Z)-2-carboxy-4-methylthiazol-5(2H)-ylidene]ethyl phosphate pocket.

This sequence belongs to the thiamine-phosphate synthase family. Mg(2+) serves as cofactor.

The catalysed reaction is 2-[(2R,5Z)-2-carboxy-4-methylthiazol-5(2H)-ylidene]ethyl phosphate + 4-amino-2-methyl-5-(diphosphooxymethyl)pyrimidine + 2 H(+) = thiamine phosphate + CO2 + diphosphate. It carries out the reaction 2-(2-carboxy-4-methylthiazol-5-yl)ethyl phosphate + 4-amino-2-methyl-5-(diphosphooxymethyl)pyrimidine + 2 H(+) = thiamine phosphate + CO2 + diphosphate. The enzyme catalyses 4-methyl-5-(2-phosphooxyethyl)-thiazole + 4-amino-2-methyl-5-(diphosphooxymethyl)pyrimidine + H(+) = thiamine phosphate + diphosphate. It participates in cofactor biosynthesis; thiamine diphosphate biosynthesis; thiamine phosphate from 4-amino-2-methyl-5-diphosphomethylpyrimidine and 4-methyl-5-(2-phosphoethyl)-thiazole: step 1/1. Condenses 4-methyl-5-(beta-hydroxyethyl)thiazole monophosphate (THZ-P) and 2-methyl-4-amino-5-hydroxymethyl pyrimidine pyrophosphate (HMP-PP) to form thiamine monophosphate (TMP). The sequence is that of Thiamine-phosphate synthase from Chromobacterium violaceum (strain ATCC 12472 / DSM 30191 / JCM 1249 / CCUG 213 / NBRC 12614 / NCIMB 9131 / NCTC 9757 / MK).